The primary structure comprises 61 residues: Small ribosomal subunit protein uS14 (61 aa).

Residues Cys24, Cys27, Cys40, and Cys43 each coordinate Zn(2+).

The protein belongs to the universal ribosomal protein uS14 family. Zinc-binding uS14 subfamily. In terms of assembly, part of the 30S ribosomal subunit. Contacts proteins S3 and S10. The cofactor is Zn(2+).

Functionally, binds 16S rRNA, required for the assembly of 30S particles and may also be responsible for determining the conformation of the 16S rRNA at the A site. The polypeptide is Small ribosomal subunit protein uS14 (Endomicrobium trichonymphae).